Here is an 88-residue protein sequence, read N- to C-terminus: Putative cancer susceptibility gene HEPN1 protein (88 aa).

As to expression, expressed in liver. Expression is either down-regulated or lost in hepatocellular carcinomas (HCC).

The protein localises to the cytoplasm. The polypeptide is Putative cancer susceptibility gene HEPN1 protein (HEPN1) (Homo sapiens (Human)).